A 756-amino-acid polypeptide reads, in one-letter code: Xylosyl- and glucuronyltransferase LARGE1 (756 aa).

Residues 1–10 (MLGICRGRRK) are Cytoplasmic-facing. Residues 11 to 31 (FLAASLTVLFVPAVTWIYLFA) form a helical; Signal-anchor for type II membrane protein membrane-spanning segment. The Lumenal portion of the chain corresponds to 32–756 (GSFEDGKPVS…LKYLTAENNS (725 aa)). Disordered stretches follow at residues 42 to 63 (LSPL…RDRE) and 81 to 109 (KQLS…EGTG). Residues 44–58 (PLESQPHSPRYTASS) are compositionally biased toward polar residues. The stretch at 55 to 90 (TASSQRDRESLEVRMREVEEENRVLRKQLSLAQGRS) forms a coiled coil. N-linked (GlcNAc...) asparagine glycosylation is found at Asn-97, Asn-122, and Asn-148. The segment at 138-413 (IHVAIVCAGY…FLEYDGNLLR (276 aa)) is xylosyltransferase activity. Positions 242 and 244 each coordinate Mn(2+). The N-linked (GlcNAc...) asparagine glycan is linked to Asn-272. A glucuronyltransferase activity region spans residues 414–756 (RELFGCPSEA…LKYLTAENNS (343 aa)). Positions 563 and 565 each coordinate Mn(2+).

It in the C-terminal section; belongs to the glycosyltransferase 49 family. In the N-terminal section; belongs to the glycosyltransferase 8 family. Mn(2+) serves as cofactor.

It is found in the golgi apparatus membrane. It carries out the reaction 3-O-[beta-D-GlcA-(1-&gt;3)-beta-D-Xyl-(1-&gt;4)-Rib-ol-P-Rib-ol-P-3-beta-D-GalNAc-(1-&gt;3)-beta-D-GlcNAc-(1-&gt;4)-(O-6-P-alpha-D-Man)]-Thr-[protein] + UDP-alpha-D-xylose = 3-O-[alpha-D-Xyl-(1-&gt;3)-beta-D-GlcA-(1-&gt;4)-beta-D-Xyl-(1-&gt;4)-Rib-ol-P-Rib-ol-P-3-beta-D-GalNAc-(1-&gt;3)-beta-D-GlcNAc-(1-&gt;4)-(O-6-P-alpha-D-Man)]-Thr-[protein] + UDP + H(+). The enzyme catalyses 3-O-{(1-&gt;[3)-alpha-D-Xyl-(1-&gt;3)-beta-D-GlcA-(1-&gt;](n)-4)-beta-D-Xyl-(1-&gt;4)-Rib-ol-P-Rib-ol-P-3-beta-D-GalNAc-(1-&gt;3)-beta-D-GlcNAc-(1-&gt;4)-O-6-P-alpha-D-Man}-L-Thr-[protein] + UDP-alpha-D-glucuronate = 3-O-{beta-D-GlcA-(1-&gt;[3)-alpha-D-Xyl-(1-&gt;3)-beta-D-GlcA-(1-&gt;](n)-4)-beta-D-Xyl-(1-&gt;4)-Rib-ol-P-Rib-ol-P-3-beta-D-GalNAc-(1-&gt;3)-beta-D-GlcNAc-(1-&gt;4)-O-6-P-alpha-D-Man}-L-Thr-[protein] + UDP + H(+). It catalyses the reaction 3-O-{beta-D-GlcA-(1-&gt;[3)-alpha-D-Xyl-(1-&gt;3)-beta-D-GlcA-(1-&gt;](n)-4)-beta-D-Xyl-(1-&gt;4)-Rib-ol-P-Rib-ol-P-3-beta-D-GalNAc-(1-&gt;3)-beta-D-GlcNAc-(1-&gt;4)-O-6-P-alpha-D-Man}-L-Thr-[protein] + UDP-alpha-D-xylose = 3-O-{(1-&gt;[3)-alpha-D-Xyl-(1-&gt;3)-beta-D-GlcA-(1-&gt;](n+1)-4)-beta-D-Xyl-(1-&gt;4)-Rib-ol-P-Rib-ol-P-3-beta-D-GalNAc-(1-&gt;3)-beta-D-GlcNAc-(1-&gt;4)-O-6-P-alpha-D-Man}-L-Thr-[protein] + UDP + H(+). The protein operates within protein modification; protein glycosylation. In terms of biological role, bifunctional glycosyltransferase with both alpha-1,3-xylosyltransferase and beta-1,3-glucuronyltransferase activities involved in the maturation of alpha-dystroglycan (DAG1) by glycosylation leading to DAG1 binding to laminin G-like domain-containing extracellular proteins with high affinity. Elongates the glucuronyl-beta-1,4-xylose-beta disaccharide primer structure initiated by B4GAT1 by adding repeating units [-3-Xylose-alpha-1,3-GlcA-beta-1-] to produce a heteropolysaccharide. Requires the phosphorylation of core M3 (O-mannosyl trisaccharide) by POMK to elongate the glucuronyl-beta-1,4-xylose-beta disaccharide primer. Plays a key role in skeletal muscle function and regeneration. The chain is Xylosyl- and glucuronyltransferase LARGE1 from Gallus gallus (Chicken).